The sequence spans 419 residues: UDP-N-acetylglucosamine 1-carboxyvinyltransferase 1 (419 aa).

A phosphoenolpyruvate-binding site is contributed by 22–23; sequence KN. Residue R92 participates in UDP-N-acetyl-alpha-D-glucosamine binding. C116 serves as the catalytic Proton donor. C116 carries the post-translational modification 2-(S-cysteinyl)pyruvic acid O-phosphothioketal. UDP-N-acetyl-alpha-D-glucosamine is bound by residues 121-125, D306, and I328; that span reads RPIDL.

Belongs to the EPSP synthase family. MurA subfamily.

It localises to the cytoplasm. It carries out the reaction phosphoenolpyruvate + UDP-N-acetyl-alpha-D-glucosamine = UDP-N-acetyl-3-O-(1-carboxyvinyl)-alpha-D-glucosamine + phosphate. It functions in the pathway cell wall biogenesis; peptidoglycan biosynthesis. Functionally, cell wall formation. Adds enolpyruvyl to UDP-N-acetylglucosamine. This chain is UDP-N-acetylglucosamine 1-carboxyvinyltransferase 1, found in Streptococcus agalactiae serotype Ia (strain ATCC 27591 / A909 / CDC SS700).